The following is a 357-amino-acid chain: DNA replication and repair protein RecF (357 aa).

Residue 30 to 37 (GANGSGKT) coordinates ATP.

Belongs to the RecF family.

It is found in the cytoplasm. Its function is as follows. The RecF protein is involved in DNA metabolism; it is required for DNA replication and normal SOS inducibility. RecF binds preferentially to single-stranded, linear DNA. It also seems to bind ATP. The sequence is that of DNA replication and repair protein RecF from Shigella flexneri serotype 5b (strain 8401).